A 300-amino-acid polypeptide reads, in one-letter code: Telomere repeat-binding factor 1 (300 aa).

Positions 1-58 constitute an HTH myb-type domain; sequence MGAPKQKWTQEEESALKSGVIKHGPGKWRTILKDPEFSGVLYLRSNVDLKDKWRNMSV. The segment at residues 28–57 is a DNA-binding region (H-T-H motif); sequence WRTILKDPEFSGVLYLRSNVDLKDKWRNMS. Disordered stretches follow at residues 93–119 and 185–213; these read LQSD…RPNV and NSTP…PSPK. The H15 domain maps to 117-185; sequence PNVRLDSLIM…KVKRKYRIPN (69 aa). Residues 241–290 adopt a coiled-coil conformation; sequence EAAAVAAQAVAEAEAAMAEAEEAAKEAEAAEAEAEAAQAFAEEASKTLKG.

Belongs to the histone H1/H5 family. SMH subfamily. As to quaternary structure, forms a homodimer and heterodimers with TRB2 or TRB3. Interacts with POT1b, TRB2 and TRB3 through its H15 domain.

It localises to the nucleus. Its subcellular location is the nucleolus. The protein localises to the chromosome. Binds preferentially double-stranded telomeric repeats. In Arabidopsis thaliana (Mouse-ear cress), this protein is Telomere repeat-binding factor 1 (TRB1).